The primary structure comprises 360 residues: 4-hydroxy-3-methylbut-2-en-1-yl diphosphate synthase (flavodoxin) (360 aa).

Cysteine 265, cysteine 268, cysteine 300, and glutamate 307 together coordinate [4Fe-4S] cluster.

It belongs to the IspG family. Requires [4Fe-4S] cluster as cofactor.

It catalyses the reaction (2E)-4-hydroxy-3-methylbut-2-enyl diphosphate + oxidized [flavodoxin] + H2O + 2 H(+) = 2-C-methyl-D-erythritol 2,4-cyclic diphosphate + reduced [flavodoxin]. Its pathway is isoprenoid biosynthesis; isopentenyl diphosphate biosynthesis via DXP pathway; isopentenyl diphosphate from 1-deoxy-D-xylulose 5-phosphate: step 5/6. In terms of biological role, converts 2C-methyl-D-erythritol 2,4-cyclodiphosphate (ME-2,4cPP) into 1-hydroxy-2-methyl-2-(E)-butenyl 4-diphosphate. In Brevibacillus brevis (strain 47 / JCM 6285 / NBRC 100599), this protein is 4-hydroxy-3-methylbut-2-en-1-yl diphosphate synthase (flavodoxin).